We begin with the raw amino-acid sequence, 426 residues long: Cuticle-degrading serine protease (426 aa).

An N-terminal signal peptide occupies residues 1-21; the sequence is MLTNGLISLLAIAGLATNAFA. Positions 22–123 are excised as a propeptide; that stretch reads GPIRKVSNAG…VEQDTVVTTY (102 aa). The region spanning 39-122 is the Inhibitor I9 domain; it reads KYIVVLKKGL…YVEQDTVVTT (84 aa). Residues 130-426 enclose the Peptidase S8 domain; sequence TWGLDRISHE…TNHQVTIVAS (297 aa). D164 (charge relay system) is an active-site residue. Residue N178 is glycosylated (N-linked (GlcNAc...) asparagine). H200 functions as the Charge relay system in the catalytic mechanism. N252 carries N-linked (GlcNAc...) asparagine glycosylation. S353 (charge relay system) is an active-site residue.

Belongs to the peptidase S8 family.

It localises to the secreted. With respect to regulation, inhibited by PMSF, SSI, the peptide Phe-Val and by Phe, but not by EDTA. Its function is as follows. Hydrolyzes gelatin, casein, the chromogenic substrate azocoll and the cuticle of the nematode P.redivivus. Immobilizes P.redivivus. This Orbilia oligospora (Nematode-trapping fungus) protein is Cuticle-degrading serine protease.